A 533-amino-acid chain; its full sequence is Non-specific phospholipase C1 (533 aa).

An N-terminal signal peptide occupies residues 1 to 22 (MAFRRVLTTVILFCYLLISSQS).

This sequence belongs to the bacterial phospholipase C family. Expressed in roots, leaves, stems, flowers and siliques.

It is found in the secreted. The sequence is that of Non-specific phospholipase C1 (NPC1) from Arabidopsis thaliana (Mouse-ear cress).